A 90-amino-acid chain; its full sequence is Small ribosomal subunit protein bS16 (90 aa).

The protein belongs to the bacterial ribosomal protein bS16 family.

The chain is Small ribosomal subunit protein bS16 from Heliobacterium modesticaldum (strain ATCC 51547 / Ice1).